The following is a 392-amino-acid chain: LL-diaminopimelate aminotransferase (392 aa).

Tyr-15, Gly-40, Lys-104, Tyr-128, and Asn-178 together coordinate substrate. Pyridoxal 5'-phosphate-binding positions include 103 to 104 (SK), Tyr-128, Asn-178, Tyr-209, and 237 to 239 (SVS). At Lys-240 the chain carries N6-(pyridoxal phosphate)lysine. Pyridoxal 5'-phosphate is bound at residue Arg-248. Arg-366 lines the substrate pocket.

This sequence belongs to the class-I pyridoxal-phosphate-dependent aminotransferase family. LL-diaminopimelate aminotransferase subfamily. As to quaternary structure, homodimer. The cofactor is pyridoxal 5'-phosphate.

The catalysed reaction is (2S,6S)-2,6-diaminopimelate + 2-oxoglutarate = (S)-2,3,4,5-tetrahydrodipicolinate + L-glutamate + H2O + H(+). It participates in amino-acid biosynthesis; L-lysine biosynthesis via DAP pathway; LL-2,6-diaminopimelate from (S)-tetrahydrodipicolinate (aminotransferase route): step 1/1. Its function is as follows. Involved in the synthesis of meso-diaminopimelate (m-DAP or DL-DAP), required for both lysine and peptidoglycan biosynthesis. Catalyzes the direct conversion of tetrahydrodipicolinate to LL-diaminopimelate. In Desulforudis audaxviator (strain MP104C), this protein is LL-diaminopimelate aminotransferase.